Consider the following 290-residue polypeptide: UPF0761 membrane protein YihY (290 aa).

At 1–43 (MLKTVHQKAGRHTRPVRAWLKLLWQRIDEDNMTTLAGNLAYVS) the chain is on the cytoplasmic side. A helical transmembrane segment spans residues 44–64 (LLSLVPLIAVVFALFAAFPMF). The Periplasmic segment spans residues 65–103 (SDVSIQLRHFIFANFMPATGDVIQRYIEQFVANSNKMTA). The chain crosses the membrane as a helical span at residues 104-124 (VGACGLIVTALLLMYAIDSAL). Residues 125-139 (NTIWRSKRTRPKVYS) lie on the Cytoplasmic side of the membrane. A helical membrane pass occupies residues 140–160 (FAVYWMILTLGPLLAGVSLAI). At 161 to 179 (SSYLLSLRWASDLNTVIDN) the chain is on the periplasmic side. The helical transmembrane segment at 180-200 (VLHILPLLLSWISFWLLYSIV) threads the bilayer. Residues 201–209 (PTTRVPNRD) lie on the Cytoplasmic side of the membrane. Residues 210–230 (ALVGAFVAALLFEAGKKGFAL) form a helical membrane-spanning segment. Residues 231–243 (YITMFPSYQLIYG) are Periplasmic-facing. A helical transmembrane segment spans residues 244–264 (VLAVIPILFVWVYWTWCIVLL). The Cytoplasmic segment spans residues 265 to 290 (GAEITVTLGEYRKLKQAAEQEEADQP).

It belongs to the UPF0761 family.

The protein localises to the cell inner membrane. The chain is UPF0761 membrane protein YihY from Salmonella typhimurium (strain LT2 / SGSC1412 / ATCC 700720).